An 85-amino-acid chain; its full sequence is Sec-independent protein translocase protein TatA (85 aa).

Residues 1–21 (MGSMSIWHWLVVGVLVLLLFG) form a helical membrane-spanning segment. The interval 39-85 (FKKGMSEEDEPTQPAEPRPTPRLQQQPPIEPNADPKLQPMQDDRPQH) is disordered.

It belongs to the TatA/E family. In terms of assembly, the Tat system comprises two distinct complexes: a TatABC complex, containing multiple copies of TatA, TatB and TatC subunits, and a separate TatA complex, containing only TatA subunits. Substrates initially bind to the TatABC complex, which probably triggers association of the separate TatA complex to form the active translocon.

It localises to the cell inner membrane. Its function is as follows. Part of the twin-arginine translocation (Tat) system that transports large folded proteins containing a characteristic twin-arginine motif in their signal peptide across membranes. TatA could form the protein-conducting channel of the Tat system. This Rhizorhabdus wittichii (strain DSM 6014 / CCUG 31198 / JCM 15750 / NBRC 105917 / EY 4224 / RW1) (Sphingomonas wittichii) protein is Sec-independent protein translocase protein TatA.